A 110-amino-acid chain; its full sequence is Urease subunit beta (110 aa).

It belongs to the urease beta subunit family. In terms of assembly, heterotrimer of UreA (gamma), UreB (beta) and UreC (alpha) subunits. Three heterotrimers associate to form the active enzyme.

The protein localises to the cytoplasm. The enzyme catalyses urea + 2 H2O + H(+) = hydrogencarbonate + 2 NH4(+). The protein operates within nitrogen metabolism; urea degradation; CO(2) and NH(3) from urea (urease route): step 1/1. In Pseudoalteromonas translucida (strain TAC 125), this protein is Urease subunit beta.